Here is a 299-residue protein sequence, read N- to C-terminus: Peroxisomal biogenesis factor 19 (299 aa).

Residues methionine 1 to leucine 63 form a disordered region. At alanine 2 the chain carries N-acetylalanine. The segment at alanine 2–glycine 56 is docking to the peroxisome membrane and binding to PEX3. The segment at alanine 2–methionine 91 is necessary for PEX19 function on peroxisome biogenesis. Residues arginine 16–aspartate 27 are compositionally biased toward acidic residues. A phosphoserine mark is found at serine 35, serine 54, and serine 66. Position 236 is a phosphothreonine (threonine 236). Cysteine 296 carries the cysteine methyl ester modification. Cysteine 296 carries S-farnesyl cysteine lipidation. Positions leucine 297–methionine 299 are cleaved as a propeptide — removed in mature form.

The protein belongs to the peroxin-19 family. As to quaternary structure, interacts with a broad range of peroxisomal membrane proteins, including PEX3, PEX10, PEX11A, PEX11B, PEX12, PEX13, PEX14 and PEX16, PXMP2/PMP22, PXMP4/PMP24, SLC25A17/PMP34, ABCD1/ALDP, ABCD2/ALDRP, and ABCD3/PMP70. Also interacts with the tumor suppressor CDKN2A/p19ARF.

Its subcellular location is the cytoplasm. The protein resides in the peroxisome membrane. Functionally, necessary for early peroxisomal biogenesis. Acts both as a cytosolic chaperone and as an import receptor for peroxisomal membrane proteins (PMPs). Binds and stabilizes newly synthesized PMPs in the cytoplasm by interacting with their hydrophobic membrane-spanning domains, and targets them to the peroxisome membrane by binding to the integral membrane protein PEX3. Excludes CDKN2A from the nucleus and prevents its interaction with MDM2, which results in active degradation of TP53. The chain is Peroxisomal biogenesis factor 19 (PEX19) from Pongo abelii (Sumatran orangutan).